The sequence spans 154 residues: Ubiquitin-like protein 4A-A (154 aa).

The Ubiquitin-like domain occupies 1 to 76 (MILTVKPLQG…LNLVVRPAGE (76 aa)).

Component of the BAT3 complex.

The protein resides in the cytoplasm. It localises to the cytosol. In terms of biological role, component of the BAT3 complex, a multiprotein complex involved in the post-translational delivery of tail-anchored (TA) membrane proteins to the endoplasmic reticulum membrane. TA membrane proteins, also named type II transmembrane proteins, contain a single C-terminal transmembrane region. The chain is Ubiquitin-like protein 4A-A (ubl4aa) from Oncorhynchus mykiss (Rainbow trout).